Reading from the N-terminus, the 163-residue chain is ATP synthase subunit b', chloroplastic (163 aa).

The chain crosses the membrane as a helical span at residues 26–46 (ATLPLMALQFILLTVILTFVF).

This sequence belongs to the ATPase B chain family. As to quaternary structure, F-type ATPases have 2 components, F(1) - the catalytic core - and F(0) - the membrane proton channel. F(1) has five subunits: alpha(3), beta(3), gamma(1), delta(1), epsilon(1). F(0) has four main subunits: a(1), b(1), b'(1) and c(10-14). The alpha and beta chains form an alternating ring which encloses part of the gamma chain. F(1) is attached to F(0) by a central stalk formed by the gamma and epsilon chains, while a peripheral stalk is formed by the delta, b and b' chains.

It is found in the plastid. Its subcellular location is the chloroplast thylakoid membrane. Functionally, f(1)F(0) ATP synthase produces ATP from ADP in the presence of a proton or sodium gradient. F-type ATPases consist of two structural domains, F(1) containing the extramembraneous catalytic core and F(0) containing the membrane proton channel, linked together by a central stalk and a peripheral stalk. During catalysis, ATP synthesis in the catalytic domain of F(1) is coupled via a rotary mechanism of the central stalk subunits to proton translocation. Its function is as follows. Component of the F(0) channel, it forms part of the peripheral stalk, linking F(1) to F(0). The b'-subunit is a diverged and duplicated form of b found in plants and photosynthetic bacteria. In Ochrosphaera neapolitana, this protein is ATP synthase subunit b', chloroplastic.